The following is a 250-amino-acid chain: Probable transcriptional regulatory protein Emin_1151 (250 aa).

It belongs to the TACO1 family.

It is found in the cytoplasm. The polypeptide is Probable transcriptional regulatory protein Emin_1151 (Elusimicrobium minutum (strain Pei191)).